Here is a 1420-residue protein sequence, read N- to C-terminus: DNA-directed RNA polymerase subunit beta'' (1420 aa).

The Zn(2+) site is built by cysteine 220, cysteine 295, cysteine 302, and cysteine 305.

Belongs to the RNA polymerase beta' chain family. RpoC2 subfamily. In plastids the minimal PEP RNA polymerase catalytic core is composed of four subunits: alpha, beta, beta', and beta''. When a (nuclear-encoded) sigma factor is associated with the core the holoenzyme is formed, which can initiate transcription. Zn(2+) serves as cofactor.

It is found in the plastid. The protein localises to the chloroplast. The catalysed reaction is RNA(n) + a ribonucleoside 5'-triphosphate = RNA(n+1) + diphosphate. Its function is as follows. DNA-dependent RNA polymerase catalyzes the transcription of DNA into RNA using the four ribonucleoside triphosphates as substrates. This is DNA-directed RNA polymerase subunit beta'' from Adiantum capillus-veneris (Maidenhair fern).